Reading from the N-terminus, the 206-residue chain is MTYLTTWTADARPRLLEETTDPARIAAVLAAIAVRFERWPLAPGLPAGAEAEDILAAYRSRIDALSAAEGFVLVDVAALHPSAAADWREVAAAARARFLAEHTHDDDEIRFFAAGSGVFYLHVDERVQAVRCEAGDLISVPKGTTHWFDMGVEPDFAAVRFFRAEDGWVGAFTGSDIATRIPDFDALARRSSSAAQPQAEAPAAAS.

Histidine 102, histidine 104, glutamate 108, and histidine 146 together coordinate Fe(2+). Positions 102, 104, 108, and 146 each coordinate Ni(2+).

Belongs to the acireductone dioxygenase (ARD) family. As to quaternary structure, monomer. It depends on Fe(2+) as a cofactor. Ni(2+) is required as a cofactor.

It carries out the reaction 1,2-dihydroxy-5-(methylsulfanyl)pent-1-en-3-one + O2 = 3-(methylsulfanyl)propanoate + CO + formate + 2 H(+). The enzyme catalyses 1,2-dihydroxy-5-(methylsulfanyl)pent-1-en-3-one + O2 = 4-methylsulfanyl-2-oxobutanoate + formate + 2 H(+). It participates in amino-acid biosynthesis; L-methionine biosynthesis via salvage pathway; L-methionine from S-methyl-5-thio-alpha-D-ribose 1-phosphate: step 5/6. Functionally, catalyzes 2 different reactions between oxygen and the acireductone 1,2-dihydroxy-3-keto-5-methylthiopentene (DHK-MTPene) depending upon the metal bound in the active site. Fe-containing acireductone dioxygenase (Fe-ARD) produces formate and 2-keto-4-methylthiobutyrate (KMTB), the alpha-ketoacid precursor of methionine in the methionine recycle pathway. Ni-containing acireductone dioxygenase (Ni-ARD) produces methylthiopropionate, carbon monoxide and formate, and does not lie on the methionine recycle pathway. The protein is Acireductone dioxygenase of Frankia alni (strain DSM 45986 / CECT 9034 / ACN14a).